The following is a 197-amino-acid chain: Cytochrome c biogenesis ATP-binding export protein CcmA (197 aa).

The region spanning 1 to 196 (MSMLSLHQLQ…VIKSAQILQL (196 aa)) is the ABC transporter domain. 35 to 42 (GANGSGKS) is a binding site for ATP.

It belongs to the ABC transporter superfamily. CcmA exporter (TC 3.A.1.107) family. In terms of assembly, the complex is composed of two ATP-binding proteins (CcmA) and two transmembrane proteins (CcmB).

It is found in the cell inner membrane. It catalyses the reaction heme b(in) + ATP + H2O = heme b(out) + ADP + phosphate + H(+). Functionally, part of the ABC transporter complex CcmAB involved in the biogenesis of c-type cytochromes; once thought to export heme, this seems not to be the case, but its exact role is uncertain. Responsible for energy coupling to the transport system. The polypeptide is Cytochrome c biogenesis ATP-binding export protein CcmA (Rickettsia typhi (strain ATCC VR-144 / Wilmington)).